Consider the following 429-residue polypeptide: Serine--tRNA ligase (429 aa).

Position 235-237 (235-237) interacts with L-serine; that stretch reads TAE. Residue 266–268 participates in ATP binding; it reads RSE. Glu289 lines the L-serine pocket. 353–356 is a binding site for ATP; that stretch reads EISS. Residue Ser389 coordinates L-serine.

This sequence belongs to the class-II aminoacyl-tRNA synthetase family. Type-1 seryl-tRNA synthetase subfamily. In terms of assembly, homodimer. The tRNA molecule binds across the dimer.

The protein resides in the cytoplasm. The catalysed reaction is tRNA(Ser) + L-serine + ATP = L-seryl-tRNA(Ser) + AMP + diphosphate + H(+). The enzyme catalyses tRNA(Sec) + L-serine + ATP = L-seryl-tRNA(Sec) + AMP + diphosphate + H(+). The protein operates within aminoacyl-tRNA biosynthesis; selenocysteinyl-tRNA(Sec) biosynthesis; L-seryl-tRNA(Sec) from L-serine and tRNA(Sec): step 1/1. Its function is as follows. Catalyzes the attachment of serine to tRNA(Ser). Is also able to aminoacylate tRNA(Sec) with serine, to form the misacylated tRNA L-seryl-tRNA(Sec), which will be further converted into selenocysteinyl-tRNA(Sec). The sequence is that of Serine--tRNA ligase from Actinobacillus succinogenes (strain ATCC 55618 / DSM 22257 / CCUG 43843 / 130Z).